We begin with the raw amino-acid sequence, 66 residues long: Large ribosomal subunit protein bL35 (66 aa).

Residues 1-16 (MPKQKTHRASAKRFKR) show a composition bias toward basic residues. The tract at residues 1-20 (MPKQKTHRASAKRFKRTGSG) is disordered.

It belongs to the bacterial ribosomal protein bL35 family.

In Streptococcus uberis (strain ATCC BAA-854 / 0140J), this protein is Large ribosomal subunit protein bL35.